Reading from the N-terminus, the 1059-residue chain is Zinc finger protein 628 (1059 aa).

6 C2H2-type zinc fingers span residues 36–58 (YECG…QRTH), 64–86 (YKCP…QRGH), 92–114 (YQCP…RSVH), 120–142 (FICG…LRQH), 148–170 (YPCP…RHVH), and 176–198 (YTCG…QRVH). A Phosphothreonine modification is found at T199. Residues 204-226 (FRCPLCPKTFTHSSNLLLHQRTH) form a C2H2-type 7 zinc finger. Disordered stretches follow at residues 226–247 (HGAA…REPG), 260–280 (LQPH…PVVP), and 312–351 (EHQP…PAAA). The segment covering 228–237 (AAPAPGTASA) has biased composition (low complexity). The span at 263 to 279 (HSPPAPPAPPPPPPPVV) shows a compositional bias: pro residues. Residues 323–335 (PQPQEAPAEAPKA) show a composition bias toward low complexity. Over residues 336–351 (DQPPSPLPQPPPPAAA) the composition is skewed to pro residues. C2H2-type zinc fingers lie at residues 356–378 (FACL…QHSH), 386–408 (FRCG…QQCH), 454–476 (YKCA…LRDH), 482–504 (YQCG…QRVH), 510–532 (FTCG…LRLH), 538–560 (YACG…RHVH), and 566–588 (HACG…QRVH). At T589 the chain carries Phosphothreonine. 2 C2H2-type zinc fingers span residues 594–616 (FRCP…QRTH) and 622–644 (FTCP…LRTH). Residues 644–658 (HAPANTPPSTTAPAA) show a composition bias toward low complexity. A disordered region spans residues 644–674 (HAPANTPPSTTAPAAGPQPPAPLAAARAPPA). 4 tandem repeats follow at residues 818–831 (VQLQ…EVTT), 832–842 (VQLQPAQEVTT), 843–853 (VQLQPAQEVTT), and 854–864 (VQLQPAQEVTT). The 4 X approximate tandem repeats stretch occupies residues 818 to 864 (VQLQPLRPAPEVTTVQLQPAQEVTTVQLQPAQEVTTVQLQPAQEVTT). The segment at 943–1059 (DGEQTRLCVQ…LPAVQLVHTF (117 aa)) is interaction with TAF4B.

In terms of assembly, interacts with TAF4B.

Its subcellular location is the nucleus. In terms of biological role, transcriptional activator. Binds DNA on GT-box consensus sequence 5'-TTGGTT-3'. Plays a role in spermiogenesis. This is Zinc finger protein 628 (ZNF628) from Homo sapiens (Human).